Reading from the N-terminus, the 173-residue chain is NADH-ubiquinone oxidoreductase chain 6 (173 aa).

A run of 6 helical transmembrane segments spans residues 1–21, 27–47, 53–73, 82–102, 106–126, and 141–161; these read MIYFVFVVLMGLVVGLMAVAS, FAALGLVFSAVVGCGFLVGYG, LVLFLIYLGGMLVVFAYSAAL, WGSWSVFLYILVYLFGFLLVG, YGWWYDFYWMSLDVFGEMSVL, and GFLLLVTGWVLLLALFVVLEI.

The protein belongs to the complex I subunit 6 family.

The protein localises to the mitochondrion membrane. The enzyme catalyses a ubiquinone + NADH + 5 H(+)(in) = a ubiquinol + NAD(+) + 4 H(+)(out). In terms of biological role, core subunit of the mitochondrial membrane respiratory chain NADH dehydrogenase (Complex I) that is believed to belong to the minimal assembly required for catalysis. Complex I functions in the transfer of electrons from NADH to the respiratory chain. The immediate electron acceptor for the enzyme is believed to be ubiquinone. The protein is NADH-ubiquinone oxidoreductase chain 6 (MT-ND6) of Latimeria chalumnae (Coelacanth).